A 511-amino-acid polypeptide reads, in one-letter code: UDP-N-acetylhexosamine pyrophosphorylase-like protein 1 (511 aa).

Over residues 1–19 (MDRSESAESAESRRRRAEE) the composition is skewed to basic and acidic residues. A disordered region spans residues 1–22 (MDRSESAESAESRRRRAEESGQ). Residues 117–120 (LAGG) carry the Substrate binding motif. Residues 117–120 (LAGG), lysine 131, glutamine 205, and glycine 231 contribute to the UTP site. Residue asparagine 232 participates in substrate binding. Aspartate 262 lines the UTP pocket. Positions 312-313 (EY) match the Substrate binding motif. Lysine 386 is a binding site for UTP. Position 416 (lysine 416) interacts with substrate.

Belongs to the UDPGP type 1 family.

This chain is UDP-N-acetylhexosamine pyrophosphorylase-like protein 1 (uap1l1), found in Xenopus tropicalis (Western clawed frog).